The sequence spans 84 residues: Putative defensin-like protein 38 (84 aa).

Residues 1–26 form the signal peptide; it reads MASSKNGTVLFVSLMILLLISTGVKA. 4 disulfide bridges follow: Cys-28–Cys-84, Cys-41–Cys-65, Cys-50–Cys-76, and Cys-54–Cys-78.

This sequence belongs to the DEFL family.

The protein localises to the secreted. The polypeptide is Putative defensin-like protein 38 (Arabidopsis thaliana (Mouse-ear cress)).